Consider the following 348-residue polypeptide: 3-isopropylmalate dehydrogenase (348 aa).

76 to 87 (GPKWTDPNNRPE) contributes to the NAD(+) binding site. Substrate-binding residues include Arg-94, Arg-104, Arg-132, and Asp-217. Residues Asp-217, Asp-241, and Asp-245 each contribute to the Mg(2+) site. Residue 275-287 (GSAPDIAGKNVAN) coordinates NAD(+).

It belongs to the isocitrate and isopropylmalate dehydrogenases family. LeuB type 1 subfamily. In terms of assembly, homodimer. Requires Mg(2+) as cofactor. The cofactor is Mn(2+).

The protein resides in the cytoplasm. The catalysed reaction is (2R,3S)-3-isopropylmalate + NAD(+) = 4-methyl-2-oxopentanoate + CO2 + NADH. It functions in the pathway amino-acid biosynthesis; L-leucine biosynthesis; L-leucine from 3-methyl-2-oxobutanoate: step 3/4. Its function is as follows. Catalyzes the oxidation of 3-carboxy-2-hydroxy-4-methylpentanoate (3-isopropylmalate) to 3-carboxy-4-methyl-2-oxopentanoate. The product decarboxylates to 4-methyl-2 oxopentanoate. The protein is 3-isopropylmalate dehydrogenase of Staphylococcus aureus (strain COL).